Reading from the N-terminus, the 97-residue chain is Defensin-like protein 246 (97 aa).

A signal peptide spans Met-1–Gly-24. 4 disulfides stabilise this stretch: Cys-39–Cys-96, Cys-50–Cys-79, Cys-58–Cys-89, and Cys-77–Cys-91.

This sequence belongs to the DEFL family. Flower buds and stems.

It localises to the secreted. The protein is Defensin-like protein 246 (SCRL5) of Arabidopsis thaliana (Mouse-ear cress).